We begin with the raw amino-acid sequence, 193 residues long: dTTP/UTP pyrophosphatase (193 aa).

The active-site Proton acceptor is the Asp77.

It belongs to the Maf family. YhdE subfamily. The cofactor is a divalent metal cation.

Its subcellular location is the cytoplasm. The enzyme catalyses dTTP + H2O = dTMP + diphosphate + H(+). It catalyses the reaction UTP + H2O = UMP + diphosphate + H(+). Functionally, nucleoside triphosphate pyrophosphatase that hydrolyzes dTTP and UTP. May have a dual role in cell division arrest and in preventing the incorporation of modified nucleotides into cellular nucleic acids. This is dTTP/UTP pyrophosphatase from Bacteroides thetaiotaomicron (strain ATCC 29148 / DSM 2079 / JCM 5827 / CCUG 10774 / NCTC 10582 / VPI-5482 / E50).